A 350-amino-acid polypeptide reads, in one-letter code: Sulfate/thiosulfate import ATP-binding protein cysA (350 aa).

In terms of domain architecture, ABC transporter spans 3–237 (IEVRNLSKRF…PATPFVYGFL (235 aa)). 35-42 (GPSGCGKT) is a binding site for ATP.

This sequence belongs to the ABC transporter superfamily. Sulfate/tungstate importer (TC 3.A.1.6) family.

The protein localises to the mitochondrion. It catalyses the reaction sulfate(out) + ATP + H2O = sulfate(in) + ADP + phosphate + H(+). The enzyme catalyses thiosulfate(out) + ATP + H2O = thiosulfate(in) + ADP + phosphate + H(+). In terms of biological role, part of the ABC transporter complex involved in sulfate/thiosulfate import. Responsible for energy coupling to the transport system. In Cucumis sativus (Cucumber), this protein is Sulfate/thiosulfate import ATP-binding protein cysA (CYSA).